The primary structure comprises 1670 residues: Hemolymph clottable protein (1670 aa).

The first 14 residues, 1–14 (MKALILLLLGACQA), serve as a signal peptide directing secretion. The interval 15–674 (LQPGLEYQYR…FANFVTTTIY (660 aa)) is vittelogenin. Residues 15–764 (LQPGLEYQYR…LKIDGQQRGL (750 aa)) enclose the Vitellogenin domain. Asn-106 carries N-linked (GlcNAc...) asparagine glycosylation. The span at 198–231 (SSYTTKTKSKTSSKTSSKTSSKTSSKTSKTGKTS) shows a compositional bias: low complexity. Residues 198–236 (SSYTTKTKSKTSSKTSSKTSSKTSSKTSKTGKTSPGQLA) form a disordered region. N-linked (GlcNAc...) asparagine glycans are attached at residues Asn-319, Asn-459, and Asn-1301. In terms of domain architecture, VWFD spans 1390–1550 (VSCTIDETKV…SWASPGEGCA (161 aa)). 2 disulfide bridges follow: Cys-1392–Cys-1513 and Cys-1414–Cys-1549.

As to quaternary structure, homodimer; disulfide-linked. Also exists as oligomers. In terms of processing, glycosylated. Contains mannose and N-acetylglucosamine. Substrate of transglutaminase. As to expression, widely expressed with highest levels in gill and heart. Not expressed in hemocytes.

It localises to the secreted. Functionally, forms stable clots in the presence of calcium. The sequence is that of Hemolymph clottable protein from Penaeus monodon (Giant tiger prawn).